Reading from the N-terminus, the 723-residue chain is Multiple organellar RNA editing factor 4, mitochondrial (723 aa).

The transit peptide at 1–64 (MAMFSHRLRR…RLFSTTQYQY (64 aa)) directs the protein to the mitochondrion. Disordered stretches follow at residues 180 to 303 (ITPG…GQTQ), 318 to 474 (RQEM…EGQP), and 663 to 723 (QNGG…NSRI). The segment covering 191-204 (EGFDSLKKESKPEQ) has biased composition (basic and acidic residues). Composition is skewed to polar residues over residues 219–233 (TSGQVQGQGSLTLPD), 273–303 (GQWQSRGQGNSFQGSFKQSQGTLPVRKGQTQ), 327–365 (GQAQRSQMPSSQGTLRQGQAQGSQRPSNQVGYNQGQGAQ), and 373–430 (QGAQ…NYSP). 2 stretches are compositionally biased toward low complexity: residues 459–474 (QGQGTPLPGQGQEGQP) and 682–695 (QGFSGQGQNQTFQQ). The span at 714 to 723 (TETRKPNSRI) shows a compositional bias: basic and acidic residues.

It belongs to the MORF family. As to quaternary structure, heterodimers with MORF8/RIP1, MORF1/RIP8 and MORF3/RIP3.

Its subcellular location is the mitochondrion. In terms of biological role, involved in organellar RNA editing. Required for the processing of few RNA editing site in mitochondria. This Arabidopsis thaliana (Mouse-ear cress) protein is Multiple organellar RNA editing factor 4, mitochondrial.